The chain runs to 366 residues: L-idonate 5-dehydrogenase (366 aa).

C56, H81, C111, C114, C117, C125, and E167 together coordinate Zn(2+).

Belongs to the zinc-containing alcohol dehydrogenase family. It depends on Zn(2+) as a cofactor.

It carries out the reaction L-idonate + NAD(+) = 5-dehydro-D-gluconate + NADH + H(+). It participates in carbohydrate acid metabolism; L-idonate degradation. Involved in the catabolism of ascorbate to tartrate. The enzyme has no activity with NADP(+). This chain is L-idonate 5-dehydrogenase, found in Vitis vinifera (Grape).